Here is a 115-residue protein sequence, read N- to C-terminus: MTTSFYFLLMALGLLLYVCQSSFGNQHTRTFDTPKHRCGSEITNSYMDLCYRKRNDAGKKRGRASPLWQRRGSLSQLKARAKRNGAFHLPRDGRGVVEHCCHRPCSNAEFKKYCS.

A signal peptide spans 1-24 (MTTSFYFLLMALGLLLYVCQSSFG). Positions 25-29 (NQHTR) are excised as a propeptide. 4-hydroxyproline; partial is present on Pro-34. 3 disulfides stabilise this stretch: Cys-38–Cys-101, Cys-50–Cys-114, and Cys-100–Cys-105. 4-carboxyglutamate is present on Glu-41. The propeptide at 53–94 (KRNDAGKKRGRASPLWQRRGSLSQLKARAKRNGAFHLPRDGR) is c peptide. A 4-carboxyglutamate modification is found at Glu-98. The residue at position 104 (Pro-104) is a 4-hydroxyproline; partial. Residue Glu-109 is modified to 4-carboxyglutamate; partial.

It belongs to the insulin family. As to quaternary structure, heterodimer of A and B chains; disulfide-linked. Post-translationally, is different from Con-Ins G1a (AC A0A0B5AC95) due to absence of amidation at Cys-114. In terms of tissue distribution, expressed by the venom gland.

The protein localises to the secreted. In terms of biological role, this venom insulin, from a fish-hunting cone snail, facilitates prey capture by rapidly inducing hypoglycemic shock. It is one of the smallest known insulin found in nature and lacks the C-terminal segment of the B chain that, in human insulin, mediates engagement of the insulin receptor (INSR) and assembly of the hormone's hexameric storage form. Despite lacking this segment, it both binds and activates human insulin receptor (long isoform (HIR-B)) with only a 10-fold lower potency. In vivo, intraperitoneal injection of this peptide into zebrafish lowers blood glucose with the same potency than human insulin. In addition, when applied to water, this peptide reduces overall locomotor activity of zebrafish larvae, observed as a significant decrease in the percentage of time spent swimming and movement frequency. This is Con-Ins G1c from Conus geographus (Geography cone).